Consider the following 505-residue polypeptide: MDVPCPWYSLLIPLFVFIFLLIHHCFFTTSKKQNMLLLPSPRKLPIIGNLHQLGSLPHRSLHKLSQKYGPVMLLHFGSKPVIVASSVDAARDIMKTHDVVWASRPKSSIVDRLSYGSKDVGFSPFGEYWRRAKSITVLHLLSNTRVQSYRNVRAEETANMIGKIRQGCDSSVINLGEHLCSLTNNIISRVALGRTYDEKESGIEHIIEQFVELLGIFNVGDYIPRLEWVNKFTGLDAKVKKVAKELDMFLEIVIEEHIIRKKKEEYTSTGEAKDFVDVLLEIQNGNETDFPLQRDSLKAILLDSFAAGTDTTFATLDWTMAELLRQPRALKTLQDEVRGLAQGKSEITEDDLKNMQYLRAVIKESLRLHPTQESLLVPRESMEDVNLLGYYHIPARTQAIINAWAIGRDPLSWENPEEYQPERFLNSDADVKGLNFKLLPFGAGRRGCPGSSFAIAVIELALARLVHKFDFALPEGIKPEDLDMTETIGITTRRKLPLLVVATPC.

A helical membrane pass occupies residues 7 to 27 (WYSLLIPLFVFIFLLIHHCFF). C448 contributes to the heme binding site.

This sequence belongs to the cytochrome P450 family. The cofactor is heme.

Its subcellular location is the membrane. In terms of biological role, may have a role in maturation, such as during flavor formation or other metabolite production specific to aging tissues. This is Cytochrome P450 71A2 (CYP71A2) from Solanum melongena (Eggplant).